The following is a 189-amino-acid chain: Cell division protein SepF (189 aa).

Disordered stretches follow at residues 1 to 75 and 155 to 174; these read MEGQ…GLPG and STPS…SPTP.

It belongs to the SepF family. Homodimer. Interacts with FtsZ.

It localises to the cytoplasm. Functionally, cell division protein that is part of the divisome complex and is recruited early to the Z-ring. Probably stimulates Z-ring formation, perhaps through the cross-linking of FtsZ protofilaments. Its function overlaps with FtsA. The sequence is that of Cell division protein SepF from Synechococcus sp. (strain JA-3-3Ab) (Cyanobacteria bacterium Yellowstone A-Prime).